A 683-amino-acid polypeptide reads, in one-letter code: Phenoloxidase 3 (683 aa).

Positions 1 to 48 (MADKKNLLLLFDHPTEPVFMDKGGNGTVFDVPDSYVTDRYNQMCKKVQ) are excised as a propeptide. Residues H209, H213, and H239 each coordinate Cu cation. Residue E351 is the Proton acceptor of the active site. N358 is a glycosylation site (N-linked (GlcNAc...) asparagine). Cu cation contacts are provided by H366, H370, and H406. N-linked (GlcNAc...) asparagine glycans are attached at residues N492 and N546. Cystine bridges form between C574-C617 and C576-C624.

Belongs to the tyrosinase family. It depends on Cu(2+) as a cofactor. Post-translationally, upon activation, a trypsin type protease cleaves prophenol oxidase to yield the active enzyme.

The protein resides in the secreted. The enzyme catalyses 2 L-dopa + O2 = 2 L-dopaquinone + 2 H2O. The catalysed reaction is L-tyrosine + O2 = L-dopaquinone + H2O. This is a copper-containing oxidase that functions in the formation of pigments such as melanins and other polyphenolic compounds. Catalyzes the rate-limiting conversions of tyrosine to DOPA, DOPA to DOPA-quinone and possibly 5,6 dihydroxyindole to indole-5'6 quinone. The polypeptide is Phenoloxidase 3 (PPO3) (Drosophila melanogaster (Fruit fly)).